The chain runs to 242 residues: Small ribosomal subunit protein uS3 (242 aa).

One can recognise a KH type-2 domain in the interval 39–109 (IRQYVKATLA…QIRINVVEVT (71 aa)). The interval 220-242 (KVNQPKRRQQKRRQQYDDRSNEG) is disordered. The segment covering 223-232 (QPKRRQQKRR) has biased composition (basic residues). The segment covering 233-242 (QQYDDRSNEG) has biased composition (basic and acidic residues).

It belongs to the universal ribosomal protein uS3 family. Part of the 30S ribosomal subunit. Forms a tight complex with proteins S10 and S14.

Binds the lower part of the 30S subunit head. Binds mRNA in the 70S ribosome, positioning it for translation. This is Small ribosomal subunit protein uS3 from Trichodesmium erythraeum (strain IMS101).